The sequence spans 898 residues: Neutral alpha-glucosidase C (898 aa).

Positions 154-173 (QRATKGNGQNTPAATSQENQ) are disordered. Positions 157–171 (TKGNGQNTPAATSQE) are enriched in polar residues. Asp-495 (nucleophile) is an active-site residue. Residue Glu-498 is part of the active site. Asp-571 functions as the Proton donor in the catalytic mechanism.

Belongs to the glycosyl hydrolase 31 family.

The enzyme catalyses Hydrolysis of terminal, non-reducing (1-&gt;4)-linked alpha-D-glucose residues with release of alpha-D-glucose.. Has alpha-glucosidase activity. The polypeptide is Neutral alpha-glucosidase C (Ganc) (Mus musculus (Mouse)).